Consider the following 576-residue polypeptide: MGSAQDQTKKRKRQKVSDGSKSSKSRVVEADDQRELTETTTKPKKQKTEDPPTDETPDAEDVEQTENGETAQDDAAKDAEAPLPSTMGLSLPTDAAPQKFDELNLSEPTMKAIRQMGFETMTEIQQRTIPPTLAGRDILGAAKTGSGKTLAFLIPAVEMLSALRFKPRNGTGVIIITPTRELALQIFGVAKELCEFHSQTYGIVIGGANRRAEAEKLNKGVNLLIATPGRLLDHLQNTQGFVYKNCKVLVLDEADRCLDVGFEAELRQIVKILPSEERQTLLFSATQTTKVEDLARISLKPGPLYINVDHRKEHATVDGVDQGYIICEADKRFLLLFTFLKKNLKKKIIIFFSSCNAVKYYADLLNYIDLPVLALHGKLKQQTRTQRFFEFCNATQGTLICTDVAARGLDIPAVDYIIQFDPPDEPKAYIHRVGRTARGTKGKIGRSIMLLQPSEVGFLNVLREARVPVVEFEFPQKKIIDIQSQLEKLIGQNYYLNQIQSAKDGYRAYLHAYASHSLRSVFNINKLDLVKVAKSFGFTTPPRVDITLGASMSKDKVQARRPYGSQNKSARFKRRA.

The tract at residues 1 to 94 (MGSAQDQTKK…STMGLSLPTD (94 aa)) is disordered. Positions 26 to 37 (RVVEADDQRELT) are enriched in basic and acidic residues. Residues 51 to 66 (PPTDETPDAEDVEQTE) show a composition bias toward acidic residues. Residues 98–126 (QKFDELNLSEPTMKAIRQMGFETMTEIQQ) carry the Q motif motif. One can recognise a Helicase ATP-binding domain in the interval 129–305 (IPPTLAGRDI…RISLKPGPLY (177 aa)). Position 142 to 149 (142 to 149 (AKTGSGKT)) interacts with ATP. The short motif at 252-255 (DEAD) is the DEAD box element. The 172-residue stretch at 319-490 (GVDQGYIICE…DIQSQLEKLI (172 aa)) folds into the Helicase C-terminal domain. The disordered stretch occupies residues 555–576 (DKVQARRPYGSQNKSARFKRRA).

The protein belongs to the DEAD box helicase family. DDX18/HAS1 subfamily. As to quaternary structure, associates in the nucleolus with the 60S and pre-60S ribosomal subunits.

The protein localises to the nucleus. It localises to the nucleolus. It carries out the reaction ATP + H2O = ADP + phosphate + H(+). ATP-dependent RNA helicase involved in 40S ribosomal subunit biogenesis. Required for the processing and cleavage of 35S pre-rRNA at sites A0, A1, and A2, leading to mature 18S rRNA. In Aspergillus terreus (strain NIH 2624 / FGSC A1156), this protein is ATP-dependent RNA helicase has1 (has1).